A 126-amino-acid polypeptide reads, in one-letter code: Holo-[acyl-carrier-protein] synthase (126 aa).

Mg(2+)-binding residues include aspartate 6 and glutamate 55.

It belongs to the P-Pant transferase superfamily. AcpS family. Mg(2+) serves as cofactor.

It localises to the cytoplasm. The enzyme catalyses apo-[ACP] + CoA = holo-[ACP] + adenosine 3',5'-bisphosphate + H(+). In terms of biological role, transfers the 4'-phosphopantetheine moiety from coenzyme A to a Ser of acyl-carrier-protein. This is Holo-[acyl-carrier-protein] synthase from Chlorobium limicola (strain DSM 245 / NBRC 103803 / 6330).